A 279-amino-acid chain; its full sequence is Threonylcarbamoyl-AMP synthase (279 aa).

A mitochondrion-targeting transit peptide spans 1–55 (MSPARRCRGMRAAVAASVGLSEGPAGSRSGRLFRPPSPAPAAPGARLLRLPGSGA). The disordered stretch occupies residues 21–41 (SEGPAGSRSGRLFRPPSPAPA). Ser-60 is subject to Phosphoserine. One can recognise a YrdC-like domain in the interval 67-257 (TEALRAAVAE…KFGIIRPGCA (191 aa)).

It belongs to the SUA5 family. In terms of assembly, interacts with RSC1A1. Ubiquitously expressed.

It is found in the cytoplasm. Its subcellular location is the mitochondrion. The protein localises to the cell membrane. It catalyses the reaction L-threonine + hydrogencarbonate + ATP = L-threonylcarbamoyladenylate + diphosphate + H2O. Cytoplasmic and mitochondrial threonylcarbamoyl-AMP synthase required for the formation of a threonylcarbamoyl group on adenosine at position 37 (t(6)A37) in tRNAs that read codons beginning with adenine. Catalyzes the conversion of L-threonine, HCO(3)(-)/CO(2) and ATP to give threonylcarbamoyl-AMP (TC-AMP) as the acyladenylate intermediate, with the release of diphosphate. Participates in t(6)A37 formation in cytoplasmic and mitochondrial tRNAs. May regulate the activity of some transporters. The polypeptide is Threonylcarbamoyl-AMP synthase (Homo sapiens (Human)).